The sequence spans 626 residues: Membrane protein insertase YidC (626 aa).

The next 5 helical transmembrane spans lie at 8-28 (LILA…LFPP), 399-419 (MGLA…PLAY), 469-489 (LPIL…FVTL), 527-547 (SIMA…SMWL), and 563-583 (IFAW…SGLL).

This sequence belongs to the OXA1/ALB3/YidC family. Type 1 subfamily. As to quaternary structure, interacts with the Sec translocase complex via SecD. Specifically interacts with transmembrane segments of nascent integral membrane proteins during membrane integration.

The protein localises to the cell inner membrane. Functionally, required for the insertion and/or proper folding and/or complex formation of integral membrane proteins into the membrane. Involved in integration of membrane proteins that insert both dependently and independently of the Sec translocase complex, as well as at least some lipoproteins. Aids folding of multispanning membrane proteins. This is Membrane protein insertase YidC from Jannaschia sp. (strain CCS1).